Consider the following 615-residue polypeptide: UvrABC system protein C (615 aa).

The GIY-YIG domain maps to 12–91 (EKPGVYIMKD…IKKYKPKYNV (80 aa)). Residues 203 to 238 (DWLIQKLKEDMKKAAEELRFEEAARIRDQIFAIERT) form the UVR domain.

It belongs to the UvrC family. As to quaternary structure, interacts with UvrB in an incision complex.

The protein resides in the cytoplasm. The UvrABC repair system catalyzes the recognition and processing of DNA lesions. UvrC both incises the 5' and 3' sides of the lesion. The N-terminal half is responsible for the 3' incision and the C-terminal half is responsible for the 5' incision. The sequence is that of UvrABC system protein C from Thermoanaerobacter pseudethanolicus (strain ATCC 33223 / 39E) (Clostridium thermohydrosulfuricum).